We begin with the raw amino-acid sequence, 613 residues long: Probable potassium transport system protein Kup (613 aa).

The next 11 helical transmembrane spans lie at 38 to 58 (VLGV…LKYL), 91 to 111 (WILV…GMIT), 128 to 148 (PSFG…LFLF), 159 to 179 (FFGP…LVEI), 206 to 226 (FLVL…YADM), 238 to 258 (WSLL…AVLL), 270 to 290 (ALVP…ATII), 328 to 348 (IYVP…VAGF), 357 to 377 (AYGV…YYVA), 387 to 407 (GLNL…GASV), and 410 to 430 (LFHG…LMLT).

It belongs to the HAK/KUP transporter (TC 2.A.72) family.

It is found in the cell inner membrane. The enzyme catalyses K(+)(in) + H(+)(in) = K(+)(out) + H(+)(out). Functionally, transport of potassium into the cell. Likely operates as a K(+):H(+) symporter. The sequence is that of Probable potassium transport system protein Kup from Chlorobaculum tepidum (strain ATCC 49652 / DSM 12025 / NBRC 103806 / TLS) (Chlorobium tepidum).